Here is a 621-residue protein sequence, read N- to C-terminus: Lethal(3)malignant brain tumor-like protein 4 (621 aa).

The tract at residues 1 to 48 (MRQPNRKRKLSLESTERMNQDRCTGQTEEEKKPGEVTTPSKRESSVTT) is disordered. 2 stretches are compositionally biased toward basic and acidic residues: residues 10 to 20 (LSLESTERMNQ) and 28 to 44 (EEEK…KRES). MBT repeat units lie at residues 52–152 (WSWE…LHIP), 160–260 (FVWM…LVAP), and 269–364 (FSWT…LEVP). A CCHHC-type zinc finger spans residues 370 to 414 (VKILPGQPACPTPGCRGIGHIRGPRYAGHHSAFGCPYSDVNLKRE). Zn(2+)-binding residues include cysteine 379, cysteine 384, histidine 398, and cysteine 404. In terms of domain architecture, SAM spans 543 to 607 (WTVDEVAEFV…YNSILMFRNS (65 aa)).

The protein resides in the nucleus. In terms of biological role, putative Polycomb group (PcG) protein. PcG proteins maintain the transcriptionally repressive state of genes, probably via a modification of chromatin, rendering it heritably changed in its expressibility. The chain is Lethal(3)malignant brain tumor-like protein 4 (L3mbtl4) from Mus musculus (Mouse).